Consider the following 142-residue polypeptide: Large ribosomal subunit protein uL13 (142 aa).

Belongs to the universal ribosomal protein uL13 family. Part of the 50S ribosomal subunit.

Its function is as follows. This protein is one of the early assembly proteins of the 50S ribosomal subunit, although it is not seen to bind rRNA by itself. It is important during the early stages of 50S assembly. The sequence is that of Large ribosomal subunit protein uL13 from Nitrosococcus oceani (strain ATCC 19707 / BCRC 17464 / JCM 30415 / NCIMB 11848 / C-107).